We begin with the raw amino-acid sequence, 384 residues long: Centrosomal protein of 44 kDa (384 aa).

Residues 11-188 (RKLEQRLRTL…TKCYSSALVE (178 aa)) form a binds with microtubules and centrioles region. A disordered region spans residues 191 to 222 (EEEEPTSDSEGGSHLEHEMESPFETAETTPNS). Over residues 201–210 (GGSHLEHEME) the composition is skewed to basic and acidic residues. Coiled-coil stretches lie at residues 221–260 (NSEQ…KGKI) and 353–378 (TEDS…SKLL).

As to quaternary structure, binds to centriolar microtubules.

It is found in the cytoplasm. The protein resides in the cytoskeleton. Its subcellular location is the microtubule organizing center. The protein localises to the centrosome. It localises to the centriole. It is found in the spindle pole. The protein resides in the midbody. Centriole-enriched microtubule-binding protein involved in centriole biogenesis. In collaboration with CEP295 and POC1B, is required for the centriole-to-centrosome conversion by ensuring the formation of bona fide centriole wall. Functions as a linker component that maintains centrosome cohesion. Associates with CROCC and regulates its stability and localization to the centrosome. The chain is Centrosomal protein of 44 kDa (cep44) from Xenopus laevis (African clawed frog).